The primary structure comprises 156 residues: Endoribonuclease YbeY (156 aa).

Residues H122, H126, and H132 each contribute to the Zn(2+) site.

This sequence belongs to the endoribonuclease YbeY family. It depends on Zn(2+) as a cofactor.

The protein resides in the cytoplasm. In terms of biological role, single strand-specific metallo-endoribonuclease involved in late-stage 70S ribosome quality control and in maturation of the 3' terminus of the 16S rRNA. The chain is Endoribonuclease YbeY from Geobacillus sp. (strain WCH70).